A 475-amino-acid chain; its full sequence is F-box protein SKIP22 (475 aa).

Positions D114 to G133 are disordered. An F-box domain is found at P319–K365.

Part of a SCF (ASK-cullin-F-box) protein ligase complex. Interacts with SKP1A/ASK1 and SPK1B/ASK2.

It localises to the nucleus. It participates in protein modification; protein ubiquitination. Its function is as follows. Component of SCF(ASK-cullin-F-box) E3 ubiquitin ligase complexes, which may mediate the ubiquitination and subsequent proteasomal degradation of target proteins. In Arabidopsis thaliana (Mouse-ear cress), this protein is F-box protein SKIP22 (SKIP22).